We begin with the raw amino-acid sequence, 153 residues long: UPF0756 membrane protein LSL_0936 (153 aa).

A run of 5 helical transmembrane segments spans residues 4–24 (WIFL…SLLI), 26–46 (GAVV…YPVI), 51–71 (INWG…TGQI), 86–106 (WIAV…VNLL), and 116–136 (LVIG…GPVI).

It belongs to the UPF0756 family.

The protein resides in the cell membrane. This Ligilactobacillus salivarius (strain UCC118) (Lactobacillus salivarius) protein is UPF0756 membrane protein LSL_0936.